Here is a 22-residue protein sequence, read N- to C-terminus: Cytin chain B (22 aa).

Belongs to the protease inhibitor I13 (potato type I serine protease inhibitor) family. Heterodimer of an A chain and a B chain, linked by a disulfide bond.

Its function is as follows. Inhibitor of chymotrypsin. This chain is Cytin chain B, found in Theromyzon tessulatum (Duck leech).